The sequence spans 184 residues: Ribosome-recycling factor (184 aa).

It belongs to the RRF family.

It is found in the cytoplasm. Functionally, responsible for the release of ribosomes from messenger RNA at the termination of protein biosynthesis. May increase the efficiency of translation by recycling ribosomes from one round of translation to another. In Natranaerobius thermophilus (strain ATCC BAA-1301 / DSM 18059 / JW/NM-WN-LF), this protein is Ribosome-recycling factor.